We begin with the raw amino-acid sequence, 356 residues long: Glucose 1-dehydrogenase (356 aa).

A disordered region spans residues 1–26 (MDAIVVSKADRTPRLVDRPRPDPTPG). A compositionally biased stretch (basic and acidic residues) spans 8-21 (KADRTPRLVDRPRP). Position 38 (Asp38) interacts with Zn(2+). Residue Thr40 coordinates substrate. Positions 63 and 64 each coordinate Zn(2+). Residues 86 to 107 (TVRRPRGDPTPQFDRGQPDMAA) form a disordered region. Substrate is bound by residues Glu113 and Glu149. Glu149 serves as a coordination point for Zn(2+). Residues 180–183 (NGSL), 205–206 (RR), 270–272 (LGV), and 300–302 (SVN) contribute to the NADP(+) site. Asn302 contacts substrate.

It belongs to the zinc-containing alcohol dehydrogenase family. Glucose 1-dehydrogenase subfamily. Zn(2+) serves as cofactor.

It carries out the reaction D-glucose + NAD(+) = D-glucono-1,5-lactone + NADH + H(+). The enzyme catalyses D-glucose + NADP(+) = D-glucono-1,5-lactone + NADPH + H(+). In terms of biological role, catalyzes the NAD(P)(+)-dependent oxidation of D-glucose to D-gluconate via gluconolactone. Can utilize both NAD(+) and NADP(+) as electron acceptor. Is involved in the degradation of glucose through a modified Entner-Doudoroff pathway. The protein is Glucose 1-dehydrogenase of Halobacterium salinarum (strain ATCC 700922 / JCM 11081 / NRC-1) (Halobacterium halobium).